The primary structure comprises 337 residues: UDP-3-O-acylglucosamine N-acyltransferase (337 aa).

Residue His-238 is the Proton acceptor of the active site.

It belongs to the transferase hexapeptide repeat family. LpxD subfamily. Homotrimer.

It carries out the reaction a UDP-3-O-[(3R)-3-hydroxyacyl]-alpha-D-glucosamine + a (3R)-hydroxyacyl-[ACP] = a UDP-2-N,3-O-bis[(3R)-3-hydroxyacyl]-alpha-D-glucosamine + holo-[ACP] + H(+). It participates in bacterial outer membrane biogenesis; LPS lipid A biosynthesis. In terms of biological role, catalyzes the N-acylation of UDP-3-O-acylglucosamine using 3-hydroxyacyl-ACP as the acyl donor. Is involved in the biosynthesis of lipid A, a phosphorylated glycolipid that anchors the lipopolysaccharide to the outer membrane of the cell. The polypeptide is UDP-3-O-acylglucosamine N-acyltransferase (Xanthomonas oryzae pv. oryzae (strain MAFF 311018)).